Consider the following 359-residue polypeptide: 3-dehydroquinate synthase (359 aa).

The protein belongs to the archaeal-type DHQ synthase family.

The enzyme catalyses 2-amino-2,3,7-trideoxy-D-lyxo-hept-6-ulosonate + NAD(+) + H2O = 3-dehydroquinate + NH4(+) + NADH + H(+). Catalyzes the oxidative deamination and cyclization of 2-amino-3,7-dideoxy-D-threo-hept-6-ulosonic acid (ADH) to yield 3-dehydroquinate (DHQ), which is fed into the canonical shikimic pathway of aromatic amino acid biosynthesis. The protein is 3-dehydroquinate synthase of Methanosphaera stadtmanae (strain ATCC 43021 / DSM 3091 / JCM 11832 / MCB-3).